The sequence spans 339 residues: NADH-quinone oxidoreductase subunit H (339 aa).

9 helical membrane passes run 9–29 (IFPL…LILC), 50–70 (PNVV…KLLF), 82–102 (ILFV…WAVI), 115–135 (VGVL…IIAG), 161–181 (MGLV…SQIV), 187–207 (MPWW…ISVL), 235–255 (MGFA…SAMT), 275–295 (IPGF…FLWI), and 311–331 (GWKV…SVLI).

It belongs to the complex I subunit 1 family. As to quaternary structure, NDH-1 is composed of 14 different subunits. Subunits NuoA, H, J, K, L, M, N constitute the membrane sector of the complex.

It is found in the cell inner membrane. The catalysed reaction is a quinone + NADH + 5 H(+)(in) = a quinol + NAD(+) + 4 H(+)(out). Its function is as follows. NDH-1 shuttles electrons from NADH, via FMN and iron-sulfur (Fe-S) centers, to quinones in the respiratory chain. The immediate electron acceptor for the enzyme in this species is believed to be ubiquinone. Couples the redox reaction to proton translocation (for every two electrons transferred, four hydrogen ions are translocated across the cytoplasmic membrane), and thus conserves the redox energy in a proton gradient. This subunit may bind ubiquinone. This chain is NADH-quinone oxidoreductase subunit H, found in Rickettsia bellii (strain RML369-C).